The primary structure comprises 131 residues: Small ribosomal subunit protein uS11 (131 aa).

Belongs to the universal ribosomal protein uS11 family. In terms of assembly, part of the 30S ribosomal subunit.

In terms of biological role, located on the platform of the 30S subunit. The chain is Small ribosomal subunit protein uS11 from Methanospirillum hungatei JF-1 (strain ATCC 27890 / DSM 864 / NBRC 100397 / JF-1).